A 369-amino-acid polypeptide reads, in one-letter code: Chaperone protein DnaJ (369 aa).

The J domain occupies 5–70; it reads DYYEVLGVGR…NKRAAYDQFG (66 aa). The segment at 128–206 adopts a CR-type zinc-finger fold; that stretch reads GAETQIRIPR…CHGAGWVKRQ (79 aa). Positions 141, 144, 158, 161, 180, 183, 194, and 197 each coordinate Zn(2+). 4 CXXCXGXG motif repeats span residues 141 to 148, 158 to 165, 180 to 187, and 194 to 201; these read CDTCHGSG, CPTCNGHG, CSHCQGSG, and CGDCHGAG.

This sequence belongs to the DnaJ family. In terms of assembly, homodimer. Zn(2+) serves as cofactor.

It localises to the cytoplasm. In terms of biological role, participates actively in the response to hyperosmotic and heat shock by preventing the aggregation of stress-denatured proteins and by disaggregating proteins, also in an autonomous, DnaK-independent fashion. Unfolded proteins bind initially to DnaJ; upon interaction with the DnaJ-bound protein, DnaK hydrolyzes its bound ATP, resulting in the formation of a stable complex. GrpE releases ADP from DnaK; ATP binding to DnaK triggers the release of the substrate protein, thus completing the reaction cycle. Several rounds of ATP-dependent interactions between DnaJ, DnaK and GrpE are required for fully efficient folding. Also involved, together with DnaK and GrpE, in the DNA replication of plasmids through activation of initiation proteins. In Nitrosomonas europaea (strain ATCC 19718 / CIP 103999 / KCTC 2705 / NBRC 14298), this protein is Chaperone protein DnaJ.